The sequence spans 247 residues: C-type lectin domain family 7 member A (247 aa).

Topologically, residues 1–44 are cytoplasmic; that stretch reads MEYHPDLENLDEDGYTQLHFDSQSNTRIAVVSEKGSCAASPPWR. Positions 15-18 match the ITAM-like motif; sequence YTQL. Residues 45–65 form a helical; Signal-anchor for type II membrane protein membrane-spanning segment; that stretch reads LIAVILGILCLVILVIAVVLG. Residues 66–247 lie on the Extracellular side of the membrane; that stretch reads TMAIWRSNSG…YSICEKKFSM (182 aa). Asn-91 is a glycosylation site (N-linked (GlcNAc...) asparagine). 3 cysteine pairs are disulfide-bonded: Cys-120–Cys-131, Cys-148–Cys-241, and Cys-220–Cys-233. Residues 127-242 enclose the C-type lectin domain; it reads YEKSCYLFSM…CSVPSYSICE (116 aa). (1,3-beta-D-glucosyl)n is bound at residue 146–153; the sequence is RQCWQLGS. A divalent metal cation contacts are provided by Lys-157, Asp-159, and Glu-163. Glu-195 is a (1,3-beta-D-glucosyl)n binding site. Position 242 (Glu-242) interacts with a divalent metal cation.

As to quaternary structure, homodimer. Interacts with SYK; participates in leukocyte activation in presence of fungal pathogens. Interacts with CD37; this interaction controls CLEC7A-mediated IL-6 production. In terms of assembly, interacts with RANBP9. In terms of processing, phosphorylated on tyrosine residues in response to beta-glucan binding. As to expression, highly expressed in peripheral blood leukocytes and dendritic cells. Detected in spleen, bone marrow, lung, muscle, stomach and placenta.

It localises to the cell membrane. It is found in the cytoplasm. Its function is as follows. Lectin that functions as a pattern recognizing receptor (PRR) specific for beta-1,3-linked and beta-1,6-linked glucans, which constitute cell wall constituents from pathogenic bacteria and fungi. Necessary for the TLR2-mediated inflammatory response and activation of NF-kappa-B: upon beta-glucan binding, recruits SYK via its ITAM motif and promotes a signaling cascade that activates some CARD domain-BCL10-MALT1 (CBM) signalosomes, leading to the activation of NF-kappa-B and MAP kinase p38 (MAPK11, MAPK12, MAPK13 and/or MAPK14) pathways which stimulate expression of genes encoding pro-inflammatory cytokines and chemokines. Enhances cytokine production in macrophages and dendritic cells. Mediates production of reactive oxygen species in the cell. Mediates phagocytosis of C.albicans conidia. Binds T-cells in a way that does not involve their surface glycans and plays a role in T-cell activation. Stimulates T-cell proliferation. Induces phosphorylation of SCIMP after binding beta-glucans. The chain is C-type lectin domain family 7 member A from Homo sapiens (Human).